A 509-amino-acid chain; its full sequence is Probable Xaa-Pro aminopeptidase MAC_04092 (509 aa).

Asp273, Asp284, Glu437, and Glu478 together coordinate Mn(2+).

The protein belongs to the peptidase M24B family. Mn(2+) is required as a cofactor.

The catalysed reaction is Release of any N-terminal amino acid, including proline, that is linked to proline, even from a dipeptide or tripeptide.. Its function is as follows. Catalyzes the removal of a penultimate prolyl residue from the N-termini of peptides. The chain is Probable Xaa-Pro aminopeptidase MAC_04092 from Metarhizium acridum (strain CQMa 102).